Reading from the N-terminus, the 279-residue chain is DegV domain-containing protein CPE1310 (279 aa).

The DegV domain maps to 4–277; sequence IKIITDSTCD…PKVCALFYVE (274 aa). Thr62 and Ser94 together coordinate hexadecanoate.

Its function is as follows. May bind long-chain fatty acids, such as palmitate, and may play a role in lipid transport or fatty acid metabolism. This chain is DegV domain-containing protein CPE1310, found in Clostridium perfringens (strain 13 / Type A).